The following is a 441-amino-acid chain: Membrane protein PB1A10.07c (441 aa).

11 helical membrane passes run 1–21 (MGAV…VVGI), 41–61 (VGAV…SWCM), 97–117 (LSFT…LCNT), 128–148 (GLWP…FFIP), 158–178 (IISV…LVDF), 206–226 (TVGM…FFCA), 235–255 (INTI…HPTI), 263–283 (GLAQ…SALA), 307–327 (VIGA…AASS), 364–384 (YNFI…ASLL), and 415–435 (IITS…PVFF).

It belongs to the TDE1 family.

It is found in the membrane. In Schizosaccharomyces pombe (strain 972 / ATCC 24843) (Fission yeast), this protein is Membrane protein PB1A10.07c.